The sequence spans 88 residues: UPF0297 protein EAT1b_2723 (88 aa).

The protein belongs to the UPF0297 family.

The protein is UPF0297 protein EAT1b_2723 of Exiguobacterium sp. (strain ATCC BAA-1283 / AT1b).